A 272-amino-acid polypeptide reads, in one-letter code: HMP-PP phosphatase (272 aa).

Asp8 (nucleophile) is an active-site residue. Positions 8, 10, and 212 each coordinate Mg(2+).

It belongs to the HAD-like hydrolase superfamily. Cof family. The cofactor is Mg(2+).

The enzyme catalyses 4-amino-2-methyl-5-(diphosphooxymethyl)pyrimidine + H2O = 4-amino-2-methyl-5-(phosphooxymethyl)pyrimidine + phosphate + H(+). Its function is as follows. Catalyzes the hydrolysis of 4-amino-2-methyl-5-hydroxymethylpyrimidine pyrophosphate (HMP-PP) to 4-amino-2-methyl-5-hydroxymethylpyrimidine phosphate (HMP-P). In Escherichia coli O157:H7, this protein is HMP-PP phosphatase.